Consider the following 63-residue polypeptide: Large ribosomal subunit protein bL28 (63 aa).

It belongs to the bacterial ribosomal protein bL28 family.

This Clostridium kluyveri (strain NBRC 12016) protein is Large ribosomal subunit protein bL28.